The sequence spans 373 residues: Erythronate-4-phosphate dehydrogenase (373 aa).

Ser45 and Thr67 together coordinate substrate. NAD(+) contacts are provided by residues Asp147, 207-209 (ASR), and Asp233. The active site involves Arg209. Glu238 is an active-site residue. His255 (proton donor) is an active-site residue. An NAD(+)-binding site is contributed by Gly258.

The protein belongs to the D-isomer specific 2-hydroxyacid dehydrogenase family. PdxB subfamily. As to quaternary structure, homodimer.

Its subcellular location is the cytoplasm. It carries out the reaction 4-phospho-D-erythronate + NAD(+) = (R)-3-hydroxy-2-oxo-4-phosphooxybutanoate + NADH + H(+). It participates in cofactor biosynthesis; pyridoxine 5'-phosphate biosynthesis; pyridoxine 5'-phosphate from D-erythrose 4-phosphate: step 2/5. In terms of biological role, catalyzes the oxidation of erythronate-4-phosphate to 3-hydroxy-2-oxo-4-phosphonooxybutanoate. The protein is Erythronate-4-phosphate dehydrogenase of Pseudoalteromonas translucida (strain TAC 125).